Here is a 490-residue protein sequence, read N- to C-terminus: Tegument protein VP16 (490 aa).

Residues 12-37 (MDADGASPPPPRPAGGPKNTPAAPPL) form a disordered region. A phosphoserine mark is found at S18, S353, S411, and S452. Residues 411-490 (STAPPTDVSL…DALGIDEYGG (80 aa)) form a transcriptional activation region.

This sequence belongs to the herpesviridae tegument protein VP16 protein family. In terms of assembly, interacts with VP22. Interacts with gH (via C-terminus). Interacts with the virion host shutoff protein (vhs). Interacts with VP11/12. Associates with the VP16-induced complex; binding to host HCFC1 activates VP16 for association with the octamer motif-binding host protein POU2F1, to form a multiprotein-DNA complex responsible for activating transcription of the viral immediate early genes.

The protein resides in the virion tegument. Its subcellular location is the host nucleus. Its function is as follows. Transcriptional activator of immediate-early (IE) gene products (alpha genes). Acts as a key activator of lytic infection by initiating the lytic program through the assembly of the transcriptional regulatory VP16-induced complex composed of VP16 and two cellular factors, HCFC1 and POU2F 1. VP16-induced complex represents a regulatory switch: when it is on, it promotes IE-gene expression and thus lytic infection, and when it is off, it limits IE-gene transcription favoring latent infection. In terms of biological role, may play a role in the aggregation of tegument proteins around nucleocapsids during virus morphogenesis. The sequence is that of Tegument protein VP16 from Homo sapiens (Human).